The chain runs to 285 residues: ATP phosphoribosyltransferase (285 aa).

Belongs to the ATP phosphoribosyltransferase family. Long subfamily. Mg(2+) serves as cofactor.

It localises to the cytoplasm. It carries out the reaction 1-(5-phospho-beta-D-ribosyl)-ATP + diphosphate = 5-phospho-alpha-D-ribose 1-diphosphate + ATP. It participates in amino-acid biosynthesis; L-histidine biosynthesis; L-histidine from 5-phospho-alpha-D-ribose 1-diphosphate: step 1/9. With respect to regulation, feedback inhibited by histidine. In terms of biological role, catalyzes the condensation of ATP and 5-phosphoribose 1-diphosphate to form N'-(5'-phosphoribosyl)-ATP (PR-ATP). Has a crucial role in the pathway because the rate of histidine biosynthesis seems to be controlled primarily by regulation of HisG enzymatic activity. This Sulfurisphaera tokodaii (strain DSM 16993 / JCM 10545 / NBRC 100140 / 7) (Sulfolobus tokodaii) protein is ATP phosphoribosyltransferase.